A 364-amino-acid chain; its full sequence is Developmentally-regulated GTP-binding protein 2 (364 aa).

Lys21 is subject to (3S)-3-hydroxylysine. The region spanning 63–288 (ARVALIGFPS…LLEMLWEYLA (226 aa)) is the OBG-type G domain. GTP is bound by residues 69–76 (GFPSVGKS), 94–98 (FTTLT), 115–118 (DLPG), 246–249 (NKID), and 269–271 (SCG). Mg(2+) is bound by residues Ser76 and Thr96. The TGS domain occupies 288–363 (ALTCIYTKKR…EHEDVIQIVK (76 aa)).

The protein belongs to the TRAFAC class OBG-HflX-like GTPase superfamily. OBG GTPase family. As to quaternary structure, interacts with RWDD1; this interaction confers protection to polyubiquitination and proteolytic degradation. Interacts with JMJD7; this interaction is direct. Mg(2+) serves as cofactor. Hydroxylated (with S stereochemistry) at C-3 of Lys-21 by JMJD7; this modification hinders trypsin-catalyzed proteolysis in vitro. Post-translationally, polyubiquitinated. In terms of tissue distribution, highest levels in skeletal muscle, heart and kidney. Low levels in colon, thymus, spleen, small intestine, lung and Leukocytes.

The protein localises to the nucleus. It is found in the cytoplasm. The enzyme catalyses GTP + H2O = GDP + phosphate + H(+). Functionally, catalyzes the conversion of GTP to GDP through hydrolysis of the gamma-phosphate bond in GTP. When hydroxylated at C-3 of 'Lys-21' by JMJD7, may bind to RNA and play a role in translation. The chain is Developmentally-regulated GTP-binding protein 2 from Homo sapiens (Human).